Reading from the N-terminus, the 160-residue chain is MNPRRKKRLGVVLAILFGLSATIGLIIYALNQNMDLFYTPTELVYGKEGKKPEIGQRLRIGGMVVEGSVKRDPNSLKVSFDLHDVGPSITVTYDGILPDLFREGQGIVAQGVLVEPTKIEAFEVLAKHDENYMPPEIAEAMKKTHAPLQYSQEQKQGSDQ.

Residues 1-8 (MNPRRKKR) are Cytoplasmic-facing. Residues 9 to 29 (LGVVLAILFGLSATIGLIIYA) form a helical; Signal-anchor for type II membrane protein membrane-spanning segment. The Periplasmic segment spans residues 30-160 (LNQNMDLFYT…SQEQKQGSDQ (131 aa)). Heme contacts are provided by H128 and Y132.

It belongs to the CcmE/CycJ family.

It is found in the cell inner membrane. Heme chaperone required for the biogenesis of c-type cytochromes. Transiently binds heme delivered by CcmC and transfers the heme to apo-cytochromes in a process facilitated by CcmF and CcmH. This is Cytochrome c-type biogenesis protein CcmE from Vibrio cholerae serotype O1 (strain ATCC 39541 / Classical Ogawa 395 / O395).